A 309-amino-acid chain; its full sequence is Isopentenyl-diphosphate Delta-isomerase II (309 aa).

A substrate-binding site is contributed by lysine 112. Mg(2+)-binding residues include histidine 116 and histidine 128. Residues 126-278 (LLHRAFSVFL…GLKLSPWFRL (153 aa)) form the Nudix hydrolase domain. Substrate-binding residues include arginine 147 and lysine 151. The active site involves cysteine 163. Serine 164 provides a ligand contact to substrate. Positions 223 and 225 each coordinate Mg(2+). Residue glutamate 225 is part of the active site.

It belongs to the IPP isomerase type 1 family. Mg(2+) serves as cofactor.

The catalysed reaction is isopentenyl diphosphate = dimethylallyl diphosphate. Its pathway is isoprenoid biosynthesis; dimethylallyl diphosphate biosynthesis; dimethylallyl diphosphate from isopentenyl diphosphate: step 1/1. It participates in porphyrin-containing compound metabolism; chlorophyll biosynthesis. Its function is as follows. Catalyzes the 1,3-allylic rearrangement of the homoallylic substrate isopentenyl (IPP) to its highly electrophilic allylic isomer, dimethylallyl diphosphate (DMAPP). The chain is Isopentenyl-diphosphate Delta-isomerase II (IPI2) from Camptotheca acuminata (Happy tree).